Here is a 273-residue protein sequence, read N- to C-terminus: 2-dehydro-3-deoxyphosphooctonate aldolase (273 aa).

Belongs to the KdsA family.

It is found in the cytoplasm. It carries out the reaction D-arabinose 5-phosphate + phosphoenolpyruvate + H2O = 3-deoxy-alpha-D-manno-2-octulosonate-8-phosphate + phosphate. The protein operates within carbohydrate biosynthesis; 3-deoxy-D-manno-octulosonate biosynthesis; 3-deoxy-D-manno-octulosonate from D-ribulose 5-phosphate: step 2/3. It functions in the pathway bacterial outer membrane biogenesis; lipopolysaccharide biosynthesis. The sequence is that of 2-dehydro-3-deoxyphosphooctonate aldolase from Cyanothece sp. (strain PCC 7425 / ATCC 29141).